A 643-amino-acid chain; its full sequence is Long-chain fatty acid transport protein 4 (643 aa).

Transmembrane regions (helical) follow at residues 20–42 and 139–156; these read LPWTQVGFSLLFLYLGSGGWRFI and FVGLWLGMAKLGVEAALI. AMP is bound at residue 243–254; that stretch reads YIYTSGTTGLPK.

This sequence belongs to the ATP-dependent AMP-binding enzyme family. In terms of tissue distribution, expressed at highest levels in brain, testis, colon and kidney. Expressed at medium levels in heart and liver, small intestine and stomach. Expressed at low levels in peripheral leukocytes, bone marrow, skeletal muscle and aorta. Expressed in adipose tissue. Expressed in brain gray matter.

Its subcellular location is the endoplasmic reticulum membrane. The enzyme catalyses a fatty acid(in) = a fatty acid(out). It carries out the reaction (9Z,12Z)-octadecadienoate(out) = (9Z,12Z)-octadecadienoate(in). It catalyses the reaction (9Z)-octadecenoate(out) = (9Z)-octadecenoate(in). The catalysed reaction is hexadecanoate(out) = hexadecanoate(in). The enzyme catalyses a long-chain fatty acid + ATP + CoA = a long-chain fatty acyl-CoA + AMP + diphosphate. It carries out the reaction hexadecanoate + ATP + CoA = hexadecanoyl-CoA + AMP + diphosphate. It catalyses the reaction (E)-hexadec-2-enoate + ATP + CoA = (2E)-hexadecenoyl-CoA + AMP + diphosphate. The catalysed reaction is (9Z)-octadecenoate + ATP + CoA = (9Z)-octadecenoyl-CoA + AMP + diphosphate. The enzyme catalyses (5Z,8Z,11Z,14Z)-eicosatetraenoate + ATP + CoA = (5Z,8Z,11Z,14Z)-eicosatetraenoyl-CoA + AMP + diphosphate. It carries out the reaction a very long-chain fatty acid + ATP + CoA = a very long-chain fatty acyl-CoA + AMP + diphosphate. It catalyses the reaction tetracosanoate + ATP + CoA = tetracosanoyl-CoA + AMP + diphosphate. In terms of biological role, mediates the levels of long-chain fatty acids (LCFA) in the cell by facilitating their transport across cell membranes. Appears to be the principal fatty acid transporter in small intestinal enterocytes. Also functions as an acyl-CoA ligase catalyzing the ATP-dependent formation of fatty acyl-CoA using LCFA and very-long-chain fatty acids (VLCFA) as substrates, which prevents fatty acid efflux from cells and might drive more fatty acid uptake. Plays a role in the formation of the epidermal barrier. Required for fat absorption in early embryogenesis. Probably involved in fatty acid transport across the blood barrier. Indirectly inhibits RPE65 via substrate competition and via production of VLCFA derivatives like lignoceroyl-CoA. Prevents light-induced degeneration of rods and cones. This is Long-chain fatty acid transport protein 4 from Homo sapiens (Human).